We begin with the raw amino-acid sequence, 367 residues long: Glutamate 5-kinase (367 aa).

Lysine 10 is an ATP binding site. The substrate site is built by serine 50, aspartate 137, and asparagine 149. ATP-binding positions include 169–170 (TD) and 211–217 (TGGMGTK). In terms of domain architecture, PUA spans 275–353 (AGEITVDDGA…QEISEILGYE (79 aa)).

It belongs to the glutamate 5-kinase family.

It localises to the cytoplasm. It catalyses the reaction L-glutamate + ATP = L-glutamyl 5-phosphate + ADP. The protein operates within amino-acid biosynthesis; L-proline biosynthesis; L-glutamate 5-semialdehyde from L-glutamate: step 1/2. In terms of biological role, catalyzes the transfer of a phosphate group to glutamate to form L-glutamate 5-phosphate. The polypeptide is Glutamate 5-kinase (Serratia proteamaculans (strain 568)).